The primary structure comprises 389 residues: Ribosomal RNA large subunit methyltransferase M (389 aa).

Residues 1 to 13 (MIGNARMSQKYPT) show a composition bias toward polar residues. Positions 1 to 24 (MIGNARMSQKYPTSSSRKRSPLSS) are disordered. S-adenosyl-L-methionine-binding positions include Ser-214, 247–250 (APGG), Asp-266, Asp-286, and Asp-302. The active-site Proton acceptor is Lys-331.

It belongs to the class I-like SAM-binding methyltransferase superfamily. RNA methyltransferase RlmE family. RlmM subfamily. As to quaternary structure, monomer.

Its subcellular location is the cytoplasm. It catalyses the reaction cytidine(2498) in 23S rRNA + S-adenosyl-L-methionine = 2'-O-methylcytidine(2498) in 23S rRNA + S-adenosyl-L-homocysteine + H(+). Its function is as follows. Catalyzes the 2'-O-methylation at nucleotide C2498 in 23S rRNA. This Hahella chejuensis (strain KCTC 2396) protein is Ribosomal RNA large subunit methyltransferase M.